The sequence spans 195 residues: Ras-related protein Rab-31 (195 aa).

GTP contacts are provided by G16, G18, K19, S20, S21, D32, and H33. S20 lines the Mg(2+) pocket. 2 short sequence motifs (switch) span residues 30-42 (HFDH…IGAS) and 63-79 (AGQE…YRGS). S36 bears the Phosphoserine mark. GTP is bound by residues T38, G64, N119, D122, A150, and K151. T38 lines the Mg(2+) pocket. 2 S-geranylgeranyl cysteine lipidation sites follow: C194 and C195.

It belongs to the small GTPase superfamily. Rab family. As to quaternary structure, interacts (in GDP-bound form) with RIN3 and GAPVD1, which function as guanine exchange factors (GEF). Interacts (in GTP-bound form) with EEA1. Interacts with NGFR. Interacts with EGFR. Interacts with OCRL. Interacts (in GTP-bound form) with APPL2; interaction contributes to or enhances recruitment of APPL2 to the phagosomes; interaction enhances Fc-gamma receptor-mediated phagocytosis through PI3K/Akt signaling in macrophages. Requires Mg(2+) as cofactor. As to expression, detected in brain astrocytes, spleen and intestine (at protein level).

Its subcellular location is the early endosome. It localises to the golgi apparatus. It is found in the trans-Golgi network. The protein localises to the trans-Golgi network membrane. The protein resides in the cytoplasmic vesicle. Its subcellular location is the phagosome. It localises to the phagosome membrane. It catalyses the reaction GTP + H2O = GDP + phosphate + H(+). Its activity is regulated as follows. Regulated by guanine nucleotide exchange factors (GEFs) including RIN3 and GAPVD1 which promote the exchange of bound GDP for free GTP. Regulated by GTPase activating proteins (GAPs) which increase the GTP hydrolysis activity. Inhibited by GDP dissociation inhibitors (GDIs) which prevent Rab-GDP dissociation. In terms of biological role, the small GTPases Rab are key regulators of intracellular membrane trafficking, from the formation of transport vesicles to their fusion with membranes. Rabs cycle between an inactive GDP-bound form and an active GTP-bound form that is able to recruit to membranes different set of downstream effectors directly responsible for vesicle formation, movement, tethering and fusion. Required for the integrity and for normal function of the Golgi apparatus and the trans-Golgi network. Plays a role in insulin-stimulated translocation of GLUT4 to the cell membrane. Plays a role in the maturation of phagosomes that engulf pathogens, such as S.aureus and Mycobacterium. Plays a role in M6PR transport from the trans-Golgi network to endosomes. Plays a role in the internalization of EGFR from the cell membrane into endosomes. The sequence is that of Ras-related protein Rab-31 from Rattus norvegicus (Rat).